The following is a 494-amino-acid chain: MTESNRRDISWIFALLAAYFVLQVGVRLATSHSLDLDEAEQAFRSQWLAAGYGPQPPFYNWLQYTVFQFAGVSLTALSIVKNLLLFISYLLYGLTARLVLRDKALVAIATLGLLTIPQMAFEMQRDLTHTVAVFFSASIFFYGFIRSLKQPSLASYLIAGIGIGFGLLAKYNFAILPAAALIAALSDARLRPRIFDWRLGLTAAVALVITLPHLFWLKDNLDFATARTLEKMTASGDASYLTQVAMGVSSLALAIISFAALTVAVFAIVFGKSLRPALGSGSEWTRLLERMMLVFLAGILLLIVFGGAAGIKDRWLVPMLFILPLYFCLKIEAAGVETGKALRRFIPVVAVIMIGVPAALYGSVAAARFTGHYERLNRPYAGMLEILRKQAEPAAILAGDSLLAGNLRQDIPGVPILSADYPGFNPDLTSRRPLLLVWLLPKGGSEALPPDMAEWLQANLGTSAPEASVIDVPYFYGRGDDRYRFGYAWVNQPG.

The next 10 membrane-spanning stretches (helical) occupy residues Ile-9–Ala-29, Leu-74–Leu-94, Ala-104–Gln-124, Leu-127–Ser-147, Tyr-156–Leu-176, Trp-197–Leu-217, Leu-251–Gly-271, Met-291–Ile-311, Leu-316–Val-336, and Phe-345–Ala-365.

The protein belongs to the glycosyltransferase 83 family.

Its subcellular location is the cell inner membrane. Its pathway is bacterial outer membrane biogenesis; LPS core biosynthesis. Functionally, involved in the modification of the lipopolysaccharide (LPS) inner core. Catalyzes the transfer of a galacturonic acid (GalA) residue to the 5-position of the outer Kdo (3-deoxy-D-manno-octulosonic acid) residue of the LPS inner core, using dodecaprenyl phosphate-GalA as the donor substrate. Acts after the other GalA transferase RgtA. In Rhizobium johnstonii (strain DSM 114642 / LMG 32736 / 3841) (Rhizobium leguminosarum bv. viciae), this protein is Lipopolysaccharide core galacturonosyltransferase RgtB.